Here is a 329-residue protein sequence, read N- to C-terminus: Ornithine carbamoyltransferase (329 aa).

Carbamoyl phosphate-binding positions include 51–54, Gln78, Arg102, and 129–132; these read STRT and HPVQ. L-ornithine-binding positions include Asn174, Asp238, and 242 to 243; that span reads SM. Residues 278 to 279 and Arg306 each bind carbamoyl phosphate; that span reads CL.

This sequence belongs to the aspartate/ornithine carbamoyltransferase superfamily. OTCase family.

The protein localises to the cytoplasm. It catalyses the reaction carbamoyl phosphate + L-ornithine = L-citrulline + phosphate + H(+). Its pathway is amino-acid biosynthesis; L-arginine biosynthesis; L-arginine from L-ornithine and carbamoyl phosphate: step 1/3. Functionally, reversibly catalyzes the transfer of the carbamoyl group from carbamoyl phosphate (CP) to the N(epsilon) atom of ornithine (ORN) to produce L-citrulline. This is Ornithine carbamoyltransferase from Helicobacter hepaticus (strain ATCC 51449 / 3B1).